The primary structure comprises 281 residues: NADPH-dependent 7-cyano-7-deazaguanine reductase (281 aa).

Residue 87–89 (IES) coordinates substrate. 89 to 90 (SK) is an NADPH binding site. Residue C188 is the Thioimide intermediate of the active site. Catalysis depends on D195, which acts as the Proton donor. Position 227-228 (227-228 (HE)) interacts with substrate. 256 to 257 (RG) is an NADPH binding site. The disordered stretch occupies residues 261 to 281 (INPYRSTEQDKPAHNHRMARQ).

Belongs to the GTP cyclohydrolase I family. QueF type 2 subfamily. As to quaternary structure, homodimer.

It localises to the cytoplasm. The catalysed reaction is 7-aminomethyl-7-carbaguanine + 2 NADP(+) = 7-cyano-7-deazaguanine + 2 NADPH + 3 H(+). Its pathway is tRNA modification; tRNA-queuosine biosynthesis. Functionally, catalyzes the NADPH-dependent reduction of 7-cyano-7-deazaguanine (preQ0) to 7-aminomethyl-7-deazaguanine (preQ1). The chain is NADPH-dependent 7-cyano-7-deazaguanine reductase from Vibrio parahaemolyticus serotype O3:K6 (strain RIMD 2210633).